We begin with the raw amino-acid sequence, 74 residues long: ATP synthase subunit c (74 aa).

2 helical membrane-spanning segments follow: residues 8 to 28 (FIGTGLMAIGMYGAALGVSNI) and 52 to 72 (IGAGLAEAMGLFSFVIAMLLI).

It belongs to the ATPase C chain family. As to quaternary structure, F-type ATPases have 2 components, F(1) - the catalytic core - and F(0) - the membrane proton channel. F(1) has five subunits: alpha(3), beta(3), gamma(1), delta(1), epsilon(1). F(0) has three main subunits: a(1), b(2) and c(10-14). The alpha and beta chains form an alternating ring which encloses part of the gamma chain. F(1) is attached to F(0) by a central stalk formed by the gamma and epsilon chains, while a peripheral stalk is formed by the delta and b chains.

The protein localises to the cell inner membrane. In terms of biological role, f(1)F(0) ATP synthase produces ATP from ADP in the presence of a proton or sodium gradient. F-type ATPases consist of two structural domains, F(1) containing the extramembraneous catalytic core and F(0) containing the membrane proton channel, linked together by a central stalk and a peripheral stalk. During catalysis, ATP synthesis in the catalytic domain of F(1) is coupled via a rotary mechanism of the central stalk subunits to proton translocation. Its function is as follows. Key component of the F(0) channel; it plays a direct role in translocation across the membrane. A homomeric c-ring of between 10-14 subunits forms the central stalk rotor element with the F(1) delta and epsilon subunits. The polypeptide is ATP synthase subunit c (Rickettsia conorii (strain ATCC VR-613 / Malish 7)).